A 540-amino-acid chain; its full sequence is Lysosomal cobalamin transport escort protein LMBD1 (540 aa).

Over 1–10 (MATSGAASAE) the chain is Extracellular. A helical membrane pass occupies residues 11-31 (LVIGWCIFGLLLLAILAFCWI). Residues 32–50 (YVRKYQSRRESEVVSTITA) are Cytoplasmic-facing. Residues 51 to 71 (IFSLAIALITSALLPVDIFLV) traverse the membrane as a helical segment. The Extracellular portion of the chain corresponds to 72–100 (SYMKNQNGTFKDWANANVSRQIEDTVLYG). Asn-78 and Asn-88 each carry an N-linked (GlcNAc...) asparagine glycan. The helical transmembrane segment at 101–121 (YYTLYSVILFCVFFWIPFVYF) threads the bilayer. Over 122–144 (YYEEKDDDDTSKCTQIKTALKYT) the chain is Cytoplasmic. The chain crosses the membrane as a helical span at residues 145–165 (LGFVVICALLLLVGAFVPLNV). At 166-188 (PNNKNSTEWEKVKSLFEELGSSH) the chain is on the extracellular side. Asn-170 is a glycosylation site (N-linked (GlcNAc...) asparagine). Residues 189-209 (GLAALSFSISSLTLIGMLAAI) traverse the membrane as a helical segment. Over 210–305 (TYTAYGMSAL…KFCGALRPLK (96 aa)) the chain is Cytoplasmic. The YERL motif; mediates interaction with adapter protein complex 2 and is essential for its function in clathrin-mediated endocytosis of INSR signature appears at 232 to 235 (YERL). Position 238 is a phosphothreonine (Thr-238). The WTKF motif; mediates interaction with adapter protein complex 2 and is essential for its function in clathrin-mediated endocytosis of INSR motif lies at 294 to 297 (WTKF). Residues 306–326 (IVWGIFFILVALLFVISLFLS) traverse the membrane as a helical segment. The Extracellular segment spans residues 327 to 364 (NLDKALHSAGIDSGFIIFGANLSNPLNMLLPLLQTVFP). Asn-347 is a glycosylation site (N-linked (GlcNAc...) asparagine). The chain crosses the membrane as a helical span at residues 365-385 (LDYILITIIIMYFIFTSMAGI). At 386–408 (RNIGIWFFWIRLYKIRRGRTRPQ) the chain is on the cytoplasmic side. The chain crosses the membrane as a helical span at residues 409–429 (ALLFLCMILLLIVLHTSYMIY). Residues 430–486 (SLAPQYVMYGSQNYLIETNITSDNHKGNSTLSVPKRCDADAPEDQCTVTRTYLFLHK) are Extracellular-facing. 2 N-linked (GlcNAc...) asparagine glycosylation sites follow: Asn-448 and Asn-457. The chain crosses the membrane as a helical span at residues 487 to 507 (FWFFSAAYYFGNWAFLGVFLI). Over 508–540 (GLIVSCCKGKKSVIEGVDEDSDISDDEPSVYSA) the chain is Cytoplasmic. Ser-528 and Ser-531 each carry phosphoserine.

This sequence belongs to the LIMR family. LMBRD1 subfamily. As to quaternary structure, (Microbial infection) Interacts with hepatitis delta virus NES (HDAg-L). Interacts with ABCD4; this interaction induces the translocation of ABCD4 from the endoplasmic reticulum to the lysosome. Interacts with ABCD4 and MMACHC; this interaction ensures the transport of cobalamin from the lysosome to the cytoplasm. Interacts with INSR, adapter protein complex 2 and clathrin heavy chain. In terms of processing, N-glycosylated. In terms of tissue distribution, isoform 3 is expressed in liver.

It localises to the endoplasmic reticulum membrane. The protein localises to the lysosome membrane. The protein resides in the cell membrane. Its subcellular location is the cytoplasmic vesicle. It is found in the clathrin-coated vesicle. Lysosomal membrane chaperone required to export cobalamin (vitamin B12) from the lysosome to the cytosol, allowing its conversion to cofactors. Targets ABCD4 transporter from the endoplasmic reticulum to the lysosome. Then forms a complex with lysosomal ABCD4 and cytoplasmic MMACHC to transport cobalamin across the lysosomal membrane. Acts as an adapter protein which plays an important role in mediating and regulating the internalization of the insulin receptor (INSR). Involved in clathrin-mediated endocytosis of INSR via its interaction with adapter protein complex 2. Essential for the initiation of gastrulation and early formation of mesoderm structures during embryogenesis. In terms of biological role, (Microbial infection) May play a role in the assembly of hepatitis delta virus (HDV). The polypeptide is Lysosomal cobalamin transport escort protein LMBD1 (Homo sapiens (Human)).